The following is a 449-amino-acid chain: Putative cytochrome P450 135A1 (449 aa).

Heme is bound at residue Cys383.

Belongs to the cytochrome P450 family. Requires heme as cofactor.

This chain is Putative cytochrome P450 135A1 (cyp135A1), found in Mycobacterium tuberculosis (strain CDC 1551 / Oshkosh).